Consider the following 305-residue polypeptide: Protein FdhE homolog (305 aa).

It belongs to the FdhE family.

It localises to the cytoplasm. Necessary for formate dehydrogenase activity. The protein is Protein FdhE homolog of Actinobacillus pleuropneumoniae serotype 7 (strain AP76).